The sequence spans 360 residues: Dihydroorotate dehydrogenase (quinone) (360 aa).

FMN-binding positions include 60 to 64 (AGFDK) and T84. Substrate is bound at residue K64. A substrate-binding site is contributed by 109–113 (NRMGF). Residues N137 and N168 each coordinate FMN. N168 serves as a coordination point for substrate. The active-site Nucleophile is the S171. Substrate is bound at residue N173. Residues K213 and S241 each contribute to the FMN site. 242–243 (NT) contributes to the substrate binding site. FMN contacts are provided by residues G264, G293, and 314–315 (YS).

This sequence belongs to the dihydroorotate dehydrogenase family. Type 2 subfamily. In terms of assembly, monomer. FMN serves as cofactor.

It is found in the cell membrane. The enzyme catalyses (S)-dihydroorotate + a quinone = orotate + a quinol. Its pathway is pyrimidine metabolism; UMP biosynthesis via de novo pathway; orotate from (S)-dihydroorotate (quinone route): step 1/1. Its function is as follows. Catalyzes the conversion of dihydroorotate to orotate with quinone as electron acceptor. The protein is Dihydroorotate dehydrogenase (quinone) of Bartonella tribocorum (strain CIP 105476 / IBS 506).